A 371-amino-acid chain; its full sequence is Pyruvate dehydrogenase E1 component subunit alpha (371 aa).

As to quaternary structure, heterodimer of an alpha and a beta chain. The cofactor is thiamine diphosphate.

It carries out the reaction N(6)-[(R)-lipoyl]-L-lysyl-[protein] + pyruvate + H(+) = N(6)-[(R)-S(8)-acetyldihydrolipoyl]-L-lysyl-[protein] + CO2. Activity of the E1 module is inhibited by the pyruvate dehydrogenase inhibitor PdhI. The pyruvate dehydrogenase complex catalyzes the overall conversion of pyruvate to acetyl-CoA and CO(2). It contains multiple copies of three enzymatic components: pyruvate dehydrogenase (E1), dihydrolipoamide acetyltransferase (E2) and lipoamide dehydrogenase (E3). Functionally, the B.subtilis PDH complex also possesses branched-chain 2-oxoacid dehydrogenase (BCDH) activity. In Bacillus subtilis (strain 168), this protein is Pyruvate dehydrogenase E1 component subunit alpha.